The chain runs to 362 residues: Probable secreted beta-glucosidase UTH1 (362 aa).

The first 17 residues, 1 to 17 (MKLSALLALSASTAVLA), serve as a signal peptide directing secretion.

The protein belongs to the SUN family.

The protein localises to the mitochondrion outer membrane. It localises to the secreted. The protein resides in the cell wall. Its function is as follows. Involved in aging, oxidative stress response, and in the regulation of mitochondrial biogenesis. Inactivation of UTH1 increases life span, leads to higher resistance to heat stress and to hydrogen peroxide, and increases sensitivity to the superoxide radical-generating drug paraquat and to copper. Also required for the selective autophagic degradation of mitochondria (mitophagy) in response to nitrogen starvation. May play a role in cell wall morphogenesis and septation. Involved in the remodeling of the cell wall during the various phases of yeast culture development and under various environmental conditions and plays a role in septation. Involved in cell sensitivity to boric acid. This Saccharomyces cerevisiae (strain YJM789) (Baker's yeast) protein is Probable secreted beta-glucosidase UTH1 (UTH1).